Reading from the N-terminus, the 458-residue chain is Argininosuccinate lyase (458 aa).

It belongs to the lyase 1 family. Argininosuccinate lyase subfamily.

The protein resides in the cytoplasm. The catalysed reaction is 2-(N(omega)-L-arginino)succinate = fumarate + L-arginine. Its pathway is amino-acid biosynthesis; L-arginine biosynthesis; L-arginine from L-ornithine and carbamoyl phosphate: step 3/3. The sequence is that of Argininosuccinate lyase from Geobacter sp. (strain M21).